A 346-amino-acid polypeptide reads, in one-letter code: Probable alcohol dehydrogenase AdhA (346 aa).

Residues Cys-51, His-73, Cys-109, Cys-112, Cys-115, Cys-123, and Cys-165 each coordinate Zn(2+).

Belongs to the zinc-containing alcohol dehydrogenase family. Zn(2+) is required as a cofactor.

The catalysed reaction is a primary alcohol + NAD(+) = an aldehyde + NADH + H(+). The enzyme catalyses a secondary alcohol + NAD(+) = a ketone + NADH + H(+). The sequence is that of Probable alcohol dehydrogenase AdhA (adhA) from Mycobacterium tuberculosis (strain CDC 1551 / Oshkosh).